The following is an 83-amino-acid chain: Small ribosomal subunit protein bS16 (83 aa).

This sequence belongs to the bacterial ribosomal protein bS16 family.

This chain is Small ribosomal subunit protein bS16, found in Herminiimonas arsenicoxydans.